Consider the following 543-residue polypeptide: CTP synthase (543 aa).

Residues 1–266 (MKTNYIFVTG…DDYICERFSL (266 aa)) form an amidoligase domain region. Ser-14 is a CTP binding site. Ser-14 is a UTP binding site. ATP contacts are provided by residues 15–20 (SLGKGI) and Asp-72. Mg(2+)-binding residues include Asp-72 and Glu-140. CTP is bound by residues 147 to 149 (DIE), 187 to 192 (KTKPTQ), and Lys-223. Residues 187–192 (KTKPTQ) and Lys-223 contribute to the UTP site. An ATP-binding site is contributed by 239–241 (KDV). The Glutamine amidotransferase type-1 domain occupies 291–538 (TVGIVGKYID…IKAASEYQKK (248 aa)). Gly-352 contacts L-glutamine. Cys-379 functions as the Nucleophile; for glutamine hydrolysis in the catalytic mechanism. Residues 380 to 383 (LGMQ), Glu-403, and Arg-466 contribute to the L-glutamine site. Active-site residues include His-511 and Glu-513.

This sequence belongs to the CTP synthase family. As to quaternary structure, homotetramer.

It carries out the reaction UTP + L-glutamine + ATP + H2O = CTP + L-glutamate + ADP + phosphate + 2 H(+). It catalyses the reaction L-glutamine + H2O = L-glutamate + NH4(+). The enzyme catalyses UTP + NH4(+) + ATP = CTP + ADP + phosphate + 2 H(+). It participates in pyrimidine metabolism; CTP biosynthesis via de novo pathway; CTP from UDP: step 2/2. Its activity is regulated as follows. Allosterically activated by GTP, when glutamine is the substrate; GTP has no effect on the reaction when ammonia is the substrate. The allosteric effector GTP functions by stabilizing the protein conformation that binds the tetrahedral intermediate(s) formed during glutamine hydrolysis. Inhibited by the product CTP, via allosteric rather than competitive inhibition. Catalyzes the ATP-dependent amination of UTP to CTP with either L-glutamine or ammonia as the source of nitrogen. Regulates intracellular CTP levels through interactions with the four ribonucleotide triphosphates. This Baumannia cicadellinicola subsp. Homalodisca coagulata protein is CTP synthase.